The sequence spans 792 residues: Zinc finger protein 606 (792 aa).

Positions 62-133 (VTFKDVAVDF…EQACPQRTCP (72 aa)) constitute a KRAB domain. The C2H2-type 1; degenerate zinc finger occupies 289 to 311 (FKCTDAVKSFNHIIHFGDHKGIH). The C2H2-type 2; degenerate zinc-finger motif lies at 317-344 (YEYKECHQIFNQSPSFNEHPRLHVGENQ). The C2H2-type 3; degenerate zinc-finger motif lies at 400–422 (YDYNECGTSFIWSSYLIQHKKTH). C2H2-type zinc fingers lie at residues 428–450 (YECD…ERTH), 456–478 (YECN…KRIH), 484–506 (YVCN…QRTH), 512–534 (FECT…MRMH), 540–562 (FKCD…ERTH), 568–590 (YKCT…QRTH), 596–618 (YNCQ…EIIH), 624–646 (YECN…QRTH), 652–674 (YECN…RRIH), 680–702 (YKCN…RRTH), 708–730 (YRCN…LRNH), 736–758 (YKCN…QRMH), and 764–786 (FICS…QRNH).

It belongs to the krueppel C2H2-type zinc-finger protein family. As to expression, widely expressed in adult and fetal tissues.

The protein resides in the nucleus. Its function is as follows. May act as a transcriptional repressor. This chain is Zinc finger protein 606 (ZNF606), found in Homo sapiens (Human).